The following is a 267-amino-acid chain: Hydroxyethylthiazole kinase (267 aa).

M42 provides a ligand contact to substrate. C118 and T162 together coordinate ATP. G189 serves as a coordination point for substrate.

Belongs to the Thz kinase family. The cofactor is Mg(2+).

It carries out the reaction 5-(2-hydroxyethyl)-4-methylthiazole + ATP = 4-methyl-5-(2-phosphooxyethyl)-thiazole + ADP + H(+). It participates in cofactor biosynthesis; thiamine diphosphate biosynthesis; 4-methyl-5-(2-phosphoethyl)-thiazole from 5-(2-hydroxyethyl)-4-methylthiazole: step 1/1. Functionally, catalyzes the phosphorylation of the hydroxyl group of 4-methyl-5-beta-hydroxyethylthiazole (THZ). The protein is Hydroxyethylthiazole kinase of Rubrobacter xylanophilus (strain DSM 9941 / JCM 11954 / NBRC 16129 / PRD-1).